Here is a 913-residue protein sequence, read N- to C-terminus: DNA polymerase (913 aa).

A contains conserved residues essential for 3' -&gt; 5' exonuclease activities region spans residues 182–401 (PLIIASWDIE…AYARKDTDLP (220 aa)).

The protein belongs to the DNA polymerase type-B family.

It catalyses the reaction DNA(n) + a 2'-deoxyribonucleoside 5'-triphosphate = DNA(n+1) + diphosphate. In terms of biological role, in addition to polymerase activity, this DNA polymerase potentially exhibits 3' to 5' exonuclease activity. In Chlorella (PBCV-NY2A), this protein is DNA polymerase (DPO).